A 112-amino-acid polypeptide reads, in one-letter code: MSDAAVDTSSEITTKDLKEKKEVVEEAENGRDAPANGNAQNEENGEQEADNEVDEEEEEGGEEEEEEEEGDGEEEDGDEDEEAEAPTGKRVAEDDEDDDVETKKQKKTDEDD.

Methionine 1 carries the N-acetylmethionine modification. The segment at 1 to 112 is disordered; it reads MSDAAVDTSS…KKQKKTDEDD (112 aa). An N-acetylserine; in Prothymosin alpha, N-terminally processed modification is found at serine 2. Position 2 is a phosphoserine (serine 2). At threonine 8 the chain carries Phosphothreonine. 2 positions are modified to phosphoserine: serine 9 and serine 10. Residues threonine 13 and threonine 14 each carry the phosphothreonine modification. The span at 13–31 shows a compositional bias: basic and acidic residues; sequence TTKDLKEKKEVVEEAENGR. N6-acetyllysine; alternate is present on lysine 15. Position 15 is an N6-succinyllysine; alternate (lysine 15). A compositionally biased stretch (acidic residues) spans 43–84; the sequence is ENGEQEADNEVDEEEEEGGEEEEEEEEGDGEEEDGDEDEEAE. Residues 101 to 112 show a composition bias toward basic and acidic residues; that stretch reads ETKKQKKTDEDD. Position 102 is a phosphothreonine (threonine 102). At lysine 103 the chain carries N6-acetyllysine; alternate. Residue lysine 103 forms a Glycyl lysine isopeptide (Lys-Gly) (interchain with G-Cter in SUMO2); alternate linkage. Threonine 108 bears the Phosphothreonine mark.

The protein belongs to the pro/parathymosin family. Interacts with NUPR1; regulates apoptotic process. Post-translationally, covalently linked to a small RNA of about 20 nucleotides.

The protein resides in the nucleus. Functionally, prothymosin alpha may mediate immune function by conferring resistance to certain opportunistic infections. The protein is Prothymosin alpha (Ptma) of Rattus norvegicus (Rat).